The primary structure comprises 1216 residues: 1-phosphatidylinositol 4,5-bisphosphate phosphodiesterase beta-1 (1216 aa).

Cys17 is lipidated: S-palmitoyl cysteine. Residue Ser236 is modified to Phosphoserine. Residues 316–467 (EDMSQPLSHY…LMYKILVKNK (152 aa)) form the PI-PLC X-box domain. Residues His331 and His378 contribute to the active site. Position 417 is a phosphoserine (Ser417). The interval 469 to 534 (KSHKSSEGSG…MDEGTAGSEA (66 aa)) is disordered. Residues 472–483 (KSSEGSGKKKLS) are compositionally biased toward basic and acidic residues. The span at 491–501 (SDSSSVFEPSS) shows a compositional bias: low complexity. The segment covering 507-518 (ADTESDDDDDDD) has biased composition (acidic residues). Thr509 carries the post-translational modification Phosphothreonine. A phosphoserine mark is found at Ser511 and Ser582. Residues 540–656 (MSNLVNYIQP…GYRLKPEFMR (117 aa)) form the PI-PLC Y-box domain. The C2 domain occupies 656–786 (RRPDKHFDPF…RNERNQPLTL (131 aa)). Disordered regions lie at residues 834–891 (DEEE…VKAP), 967–989 (EKSAKKDSKKKSEPSSPDHGSSA), 1072–1095 (MDKKRQEKITEAKSKDKSQMEEEK), and 1173–1216 (ISED…DTPL). Residues 846–868 (ETSSEAPSETRTTPAENGVNHTA) show a composition bias toward polar residues. Ser887 is subject to Phosphoserine; by PKC. Positions 967-979 (EKSAKKDSKKKSE) are enriched in basic and acidic residues. Phosphoserine is present on residues Ser978 and Ser987. A compositionally biased stretch (basic and acidic residues) spans 1075–1095 (KRQEKITEAKSKDKSQMEEEK). Phosphoserine is present on residues Ser1197, Ser1199, and Ser1200. A compositionally biased stretch (basic and acidic residues) spans 1205 to 1216 (RENPGREFDTPL).

As to quaternary structure, interacts with DGKQ. It depends on Ca(2+) as a cofactor. Post-translationally, palmitoylated. Palmitoylation at Cys-17 by ZDHHC21 regulates the signaling activity of PLCB1 and the function of the endothelial barrier. Palmitoylation by ZDHHC21 is stimulated by inflammation.

It localises to the nucleus membrane. The protein resides in the cytoplasm. It catalyses the reaction a 1,2-diacyl-sn-glycero-3-phospho-(1D-myo-inositol-4,5-bisphosphate) + H2O = 1D-myo-inositol 1,4,5-trisphosphate + a 1,2-diacyl-sn-glycerol + H(+). It carries out the reaction a 1,2-diacyl-sn-glycero-3-phospho-(1D-myo-inositol) + H2O = 1D-myo-inositol 1-phosphate + a 1,2-diacyl-sn-glycerol + H(+). Functionally, catalyzes the hydrolysis of 1-phosphatidylinositol 4,5-bisphosphate into diacylglycerol (DAG) and inositol 1,4,5-trisphosphate (IP3) and mediates intracellular signaling downstream of G protein-coupled receptors. Regulates the function of the endothelial barrier. This Mus musculus (Mouse) protein is 1-phosphatidylinositol 4,5-bisphosphate phosphodiesterase beta-1.